A 438-amino-acid polypeptide reads, in one-letter code: Cyanidin-3-O-glucoside 2-O-glucuronosyltransferase (438 aa).

UDP-alpha-D-glucuronate-binding positions include Ser264, Trp315–Val316, His333–Glu341, and Gln355–Gln358.

This sequence belongs to the UDP-glycosyltransferase family. In terms of assembly, monomer. Expressed in petals. Not detected in sepals, stems, leaves, tubular corollas and white petals.

The protein resides in the cytoplasm. It catalyses the reaction cyanidin 3-O-beta-D-glucoside + UDP-alpha-D-glucuronate = cyanidin 3-O-(2-O-beta-D-glucuronosyl)-beta-D-glucoside + UDP + H(+). Its activity is regulated as follows. Inhibited by copper, mercury, UDP, UTP and partially by calcium, cadmium, iron and UMP. Not affected by cobalt, magnesium, manganese, zinc, nickel, tin, uridine, sadium malonate and glucose. In terms of biological role, involved in the production of glucuronosylated anthocyanins that are the origin of the red coloration of flowers. Can use cyanidin 3-O-6''-O-malonylglucoside, cyanidin 3-O-glucoside and delphinidin 3-O-glucosideas substrates, but not pelargonidin 3-O-glucoside, cyanidin 3-O-3'',6''-O-dimalonylglucoside, pelargonidin 3,5-O-diglucoside, pelargonidin 3-O-6''-O-malonylglucoside-5-O-glucoside, quercetin 3-O-glucoside, quercetin 3-O-6''-O-malonylglucoside, daidzin, genistin,7-O-6''-O-malonylglucosides of daidzein and genistein, cyanidin, quercetin, daidzein, genistein p-Nitrophenyl beta-D-glucopyranoside, beta-estradiol, 17alpha-estradiol, 1-naphthol, 2-naphthol, 4-methylumbelliferone, and p-nitrophenol. Highly specific for UDP-glucuronate (UDP-GlcUA). Arg-25 is decisive with respect to UDP-sugar specificity. The protein is Cyanidin-3-O-glucoside 2-O-glucuronosyltransferase (UGAT) of Bellis perennis (English daisy).